A 222-amino-acid chain; its full sequence is Deoxyribose-phosphate aldolase (222 aa).

Asp-89 acts as the Proton donor/acceptor in catalysis. Lys-152 functions as the Schiff-base intermediate with acetaldehyde in the catalytic mechanism. Catalysis depends on Lys-181, which acts as the Proton donor/acceptor.

It belongs to the DeoC/FbaB aldolase family. DeoC type 1 subfamily.

It localises to the cytoplasm. It carries out the reaction 2-deoxy-D-ribose 5-phosphate = D-glyceraldehyde 3-phosphate + acetaldehyde. It functions in the pathway carbohydrate degradation; 2-deoxy-D-ribose 1-phosphate degradation; D-glyceraldehyde 3-phosphate and acetaldehyde from 2-deoxy-alpha-D-ribose 1-phosphate: step 2/2. Its function is as follows. Catalyzes a reversible aldol reaction between acetaldehyde and D-glyceraldehyde 3-phosphate to generate 2-deoxy-D-ribose 5-phosphate. This is Deoxyribose-phosphate aldolase from Clostridium novyi (strain NT).